Consider the following 366-residue polypeptide: Chorismate synthase (366 aa).

Arginine 48 and arginine 54 together coordinate NADP(+). FMN-binding positions include 125-127, 238-239, glycine 278, 293-297, and arginine 319; these read RSS, NA, and KPTSS.

It belongs to the chorismate synthase family. Homotetramer. FMNH2 is required as a cofactor.

It carries out the reaction 5-O-(1-carboxyvinyl)-3-phosphoshikimate = chorismate + phosphate. The protein operates within metabolic intermediate biosynthesis; chorismate biosynthesis; chorismate from D-erythrose 4-phosphate and phosphoenolpyruvate: step 7/7. Catalyzes the anti-1,4-elimination of the C-3 phosphate and the C-6 proR hydrogen from 5-enolpyruvylshikimate-3-phosphate (EPSP) to yield chorismate, which is the branch point compound that serves as the starting substrate for the three terminal pathways of aromatic amino acid biosynthesis. This reaction introduces a second double bond into the aromatic ring system. The polypeptide is Chorismate synthase (Paraburkholderia phytofirmans (strain DSM 17436 / LMG 22146 / PsJN) (Burkholderia phytofirmans)).